The primary structure comprises 211 residues: Uridine kinase (211 aa).

Residue 15–22 coordinates ATP; that stretch reads GGSGSGKT.

It belongs to the uridine kinase family.

Its subcellular location is the cytoplasm. The catalysed reaction is uridine + ATP = UMP + ADP + H(+). It catalyses the reaction cytidine + ATP = CMP + ADP + H(+). The protein operates within pyrimidine metabolism; CTP biosynthesis via salvage pathway; CTP from cytidine: step 1/3. Its pathway is pyrimidine metabolism; UMP biosynthesis via salvage pathway; UMP from uridine: step 1/1. In Lactobacillus helveticus (strain DPC 4571), this protein is Uridine kinase.